We begin with the raw amino-acid sequence, 136 residues long: MTERTLILIKPDGVTNGHVGEIIARIERKGLKLAALDLRVADRETAEKHYEEHADKPFFGELVEFITSAPLIAGIVEGERAIDAWRQLAGGTDPVSKATPGTIRGDFALTVGENVVHGSDSPESAEREISIWFPNL.

Residues lysine 10, phenylalanine 58, arginine 86, threonine 92, arginine 104, and asparagine 114 each coordinate ATP. The active-site Pros-phosphohistidine intermediate is the histidine 117.

The protein belongs to the NDK family. As to quaternary structure, homotetramer. It depends on Mg(2+) as a cofactor.

Its subcellular location is the cytoplasm. The enzyme catalyses a 2'-deoxyribonucleoside 5'-diphosphate + ATP = a 2'-deoxyribonucleoside 5'-triphosphate + ADP. The catalysed reaction is a ribonucleoside 5'-diphosphate + ATP = a ribonucleoside 5'-triphosphate + ADP. Major role in the synthesis of nucleoside triphosphates other than ATP. The ATP gamma phosphate is transferred to the NDP beta phosphate via a ping-pong mechanism, using a phosphorylated active-site intermediate. This chain is Nucleoside diphosphate kinase, found in Corynebacterium efficiens (strain DSM 44549 / YS-314 / AJ 12310 / JCM 11189 / NBRC 100395).